The chain runs to 675 residues: DNA ligase (675 aa).

Residues 32–36 (DAEYD), 81–82 (SL), and E113 each bind NAD(+). The active-site N6-AMP-lysine intermediate is K115. 4 residues coordinate NAD(+): R136, E173, K291, and K315. C409, C412, C427, and C433 together coordinate Zn(2+). Positions 595 to 675 (SEKTYFFNKK…ELNSLIRIKE (81 aa)) constitute a BRCT domain.

The protein belongs to the NAD-dependent DNA ligase family. LigA subfamily. Mg(2+) is required as a cofactor. The cofactor is Mn(2+).

It carries out the reaction NAD(+) + (deoxyribonucleotide)n-3'-hydroxyl + 5'-phospho-(deoxyribonucleotide)m = (deoxyribonucleotide)n+m + AMP + beta-nicotinamide D-nucleotide.. Its function is as follows. DNA ligase that catalyzes the formation of phosphodiester linkages between 5'-phosphoryl and 3'-hydroxyl groups in double-stranded DNA using NAD as a coenzyme and as the energy source for the reaction. It is essential for DNA replication and repair of damaged DNA. This is DNA ligase from Buchnera aphidicola subsp. Acyrthosiphon pisum (strain 5A).